The following is a 173-amino-acid chain: Pyridoxal 5'-phosphate synthase subunit PdxT (173 aa).

49–51 (GES) is an L-glutamine binding site. C81 functions as the Nucleophile in the catalytic mechanism. Residues R113 and 141 to 142 (IR) contribute to the L-glutamine site.

The protein belongs to the glutaminase PdxT/SNO family. In the presence of PdxS, forms a dodecamer of heterodimers. Only shows activity in the heterodimer.

It carries out the reaction aldehydo-D-ribose 5-phosphate + D-glyceraldehyde 3-phosphate + L-glutamine = pyridoxal 5'-phosphate + L-glutamate + phosphate + 3 H2O + H(+). The enzyme catalyses L-glutamine + H2O = L-glutamate + NH4(+). It functions in the pathway cofactor biosynthesis; pyridoxal 5'-phosphate biosynthesis. Its function is as follows. Catalyzes the hydrolysis of glutamine to glutamate and ammonia as part of the biosynthesis of pyridoxal 5'-phosphate. The resulting ammonia molecule is channeled to the active site of PdxS. The chain is Pyridoxal 5'-phosphate synthase subunit PdxT from Mycolicibacterium paratuberculosis (strain ATCC BAA-968 / K-10) (Mycobacterium paratuberculosis).